Here is a 1235-residue protein sequence, read N- to C-terminus: Phosphorylase b kinase regulatory subunit alpha, liver isoform (1235 aa).

Ser697, Ser731, and Ser737 each carry phosphoserine. Residues 808 to 838 are calmodulin-binding; that stretch reads LSELYGKAGLNQEWGLIRYISGLLRKKVEVL. The segment covering 976 to 986 has biased composition (low complexity); that stretch reads SSASSPAISIH. The disordered stretch occupies residues 976 to 1002; the sequence is SSASSPAISIHEVGHTGVTKTERSGIN. Phosphoserine is present on residues Ser984, Ser1016, and Ser1044. Low complexity predominate over residues 1032-1053; the sequence is AYSKSVRSSTPSSPTGTSSSDS. A disordered region spans residues 1032 to 1060; sequence AYSKSVRSSTPSSPTGTSSSDSGGHHISW. The tract at residues 1059 to 1099 is calmodulin-binding; sequence SWGERQGQWLRRRRLDGAINRVPVGFYQRVWKILQKCHGLS. Residue Cys1232 is the site of S-farnesyl cysteine attachment.

Belongs to the phosphorylase b kinase regulatory chain family. As to quaternary structure, hexadecamer of 4 heterotetramers, each composed of alpha, beta, gamma, and delta subunits. Alpha (PHKA1 or PHKA2) and beta (PHKB) are regulatory subunits, gamma (PHKG1 or PHKG2) is the catalytic subunit, and delta is calmodulin. In terms of processing, although the final Cys may be farnesylated, the terminal tripeptide is probably not removed, and the C-terminus is not methylated. As to expression, predominantly expressed in liver and other non-muscle tissues.

The protein resides in the cell membrane. The protein operates within glycan biosynthesis; glycogen metabolism. By phosphorylation of various serine residues and by calcium. In terms of biological role, phosphorylase b kinase catalyzes the phosphorylation of serine in certain substrates, including troponin I. The alpha chain may bind calmodulin. This Oryctolagus cuniculus (Rabbit) protein is Phosphorylase b kinase regulatory subunit alpha, liver isoform (PHKA2).